Reading from the N-terminus, the 48-residue chain is Large ribosomal subunit protein bL32c (48 aa).

This sequence belongs to the bacterial ribosomal protein bL32 family.

It is found in the plastid. Its subcellular location is the chloroplast. In Vicia faba (Broad bean), this protein is Large ribosomal subunit protein bL32c (rpl32).